The chain runs to 120 residues: Immunoglobulin kappa variable 2-30 (120 aa).

Positions 1 to 20 (MRLPAQLLGLLMLWVPGSSG) are cleaved as a signal peptide. The framework-1 stretch occupies residues 21–43 (DVVMTQSPLSLPVTLGQPASISC). The Ig-like domain occupies 21-120 (DVVMTQSPLS…YYCMQGTHWP (100 aa)). A disulfide bridge links Cys43 with Cys113. A complementarity-determining-1 region spans residues 44-59 (RSSQSLVYSDGNTYLN). The tract at residues 60–74 (WFQQRPGQSPRRLIY) is framework-2. The complementarity-determining-2 stretch occupies residues 75-81 (KVSNRDS). The framework-3 stretch occupies residues 82–113 (GVPDRFSGSGSGTDFTLKISRVEAEDVGVYYC). A complementarity-determining-3 region spans residues 114-120 (MQGTHWP).

In terms of assembly, immunoglobulins are composed of two identical heavy chains and two identical light chains; disulfide-linked.

It is found in the secreted. The protein localises to the cell membrane. In terms of biological role, v region of the variable domain of immunoglobulin light chains that participates in the antigen recognition. Immunoglobulins, also known as antibodies, are membrane-bound or secreted glycoproteins produced by B lymphocytes. In the recognition phase of humoral immunity, the membrane-bound immunoglobulins serve as receptors which, upon binding of a specific antigen, trigger the clonal expansion and differentiation of B lymphocytes into immunoglobulins-secreting plasma cells. Secreted immunoglobulins mediate the effector phase of humoral immunity, which results in the elimination of bound antigens. The antigen binding site is formed by the variable domain of one heavy chain, together with that of its associated light chain. Thus, each immunoglobulin has two antigen binding sites with remarkable affinity for a particular antigen. The variable domains are assembled by a process called V-(D)-J rearrangement and can then be subjected to somatic hypermutations which, after exposure to antigen and selection, allow affinity maturation for a particular antigen. This chain is Immunoglobulin kappa variable 2-30, found in Homo sapiens (Human).